Consider the following 728-residue polypeptide: E3 ubiquitin-protein ligase LNX (728 aa).

An RING-type zinc finger spans residues 45–83; that stretch reads CHICLQALLDPLDTPCGHTYCTLCLTNFLVEKDFCPVDR. An NPXY motif motif is present at residues 185–188; it reads NPAY. The disordered stretch occupies residues 185–220; it reads NPAYVSSVEDGEPVANSSDSGRSNRTRARPFERSTM. Residues 186–244 form an interaction with MAGEB18 region; the sequence is PAYVSSVEDGEPVANSSDSGRSNRTRARPFERSTMRSRSFKKINRALSALRRTKSGSVV. PDZ domains are found at residues 278–362 and 385–467; these read SIKI…VLRE and HVIL…VSRQ. Residue serine 445 is modified to Phosphoserine. The segment at 481–500 is disordered; that stretch reads WISNGQQSPGPGERNTASKP. PDZ domains follow at residues 508–593 and 638–723; these read VVSV…ALEV and DVIL…IASW.

In terms of assembly, interacts with CXADR. Interacts with MAGEB18 and MAGEF1. Interacts with the phosphotyrosine interaction domain of all isoforms of NUMB. IGSF5/JAM4 interacts with isoform 2 through the second PDZ domain, other isoforms may also interact with IGSF5/JAM4. Isoform 1 and isoform 2 are expressed in the heart. Isoform 1 is also expressed in kidney, lung and skeletal muscle while isoform 2 is also expressed in brain.

The protein resides in the cytoplasm. It carries out the reaction S-ubiquitinyl-[E2 ubiquitin-conjugating enzyme]-L-cysteine + [acceptor protein]-L-lysine = [E2 ubiquitin-conjugating enzyme]-L-cysteine + N(6)-ubiquitinyl-[acceptor protein]-L-lysine.. It functions in the pathway protein modification; protein ubiquitination. E3 ubiquitin-protein ligase that mediates ubiquitination and subsequent proteasomal degradation of NUMB. E3 ubiquitin ligases accept ubiquitin from an E2 ubiquitin-conjugating enzyme in the form of a thioester and then directly transfers the ubiquitin to targeted substrates. Mediates ubiquitination of isoform p66 and isoform p72 of NUMB, but not that of isoform p71 or isoform p65. In terms of biological role, isoform 2 provides an endocytic scaffold for IGSF5/JAM4. This is E3 ubiquitin-protein ligase LNX (Lnx1) from Mus musculus (Mouse).